Consider the following 378-residue polypeptide: Putative dioxygenase VC_1345 (378 aa).

Fe cation-binding residues include His-288, Asp-294, and His-324.

The protein belongs to the homogentisate dioxygenase family. Requires Fe cation as cofactor.

This Vibrio cholerae serotype O1 (strain ATCC 39315 / El Tor Inaba N16961) protein is Putative dioxygenase VC_1345.